A 248-amino-acid polypeptide reads, in one-letter code: Ubiquinone biosynthesis O-methyltransferase (248 aa).

S-adenosyl-L-methionine contacts are provided by arginine 40, glycine 71, aspartate 92, and methionine 135.

The protein belongs to the methyltransferase superfamily. UbiG/COQ3 family.

It carries out the reaction a 3-demethylubiquinol + S-adenosyl-L-methionine = a ubiquinol + S-adenosyl-L-homocysteine + H(+). It catalyses the reaction a 3-(all-trans-polyprenyl)benzene-1,2-diol + S-adenosyl-L-methionine = a 2-methoxy-6-(all-trans-polyprenyl)phenol + S-adenosyl-L-homocysteine + H(+). It functions in the pathway cofactor biosynthesis; ubiquinone biosynthesis. Functionally, O-methyltransferase that catalyzes the 2 O-methylation steps in the ubiquinone biosynthetic pathway. In Roseobacter denitrificans (strain ATCC 33942 / OCh 114) (Erythrobacter sp. (strain OCh 114)), this protein is Ubiquinone biosynthesis O-methyltransferase.